The chain runs to 397 residues: P2X purinoceptor 3 (397 aa).

Over 1–20 the chain is Cytoplasmic; it reads MNCISDFFTYETTKSVVVKS. Residues 21 to 43 form a helical membrane-spanning segment; sequence WTIGIINRVVQLLIISYFVGWVF. At 44–322 the chain is on the extracellular side; sequence LHEKAYQVRD…AGKFNIIPTI (279 aa). Lys63 and Lys65 together coordinate ATP. Cystine bridges form between Cys107-Cys153, Cys116-Cys137, and Cys122-Cys147. A Mg(2+)-binding site is contributed by Glu111. N-linked (GlcNAc...) asparagine glycosylation occurs at Asn139. A Mg(2+)-binding site is contributed by Asp158. Position 158 (Asp158) interacts with Ca(2+). A glycan (N-linked (GlcNAc...) asparagine) is linked at Asn170. ATP is bound at residue Thr172. The N-linked (GlcNAc...) asparagine glycan is linked to Asn194. Cystine bridges form between Cys203/Cys213 and Cys247/Cys256. Residues Ser275, Asn279, and Arg281 each coordinate ATP. Asn290 carries an N-linked (GlcNAc...) asparagine glycan. Lys299 contacts ATP. The chain crosses the membrane as a helical span at residues 323–341; it reads ISSVAAFTSVGVGTVLCDI. Topologically, residues 342-397 are cytoplasmic; the sequence is ILLNFLKGADQYKAKKFEEVNETTLKIAALTNPVYPSDQTTAEKQSTDSGAFSIGH. The segment covering 378-391 has biased composition (polar residues); sequence SDQTTAEKQSTDSG. A disordered region spans residues 378–397; sequence SDQTTAEKQSTDSGAFSIGH.

This sequence belongs to the P2X receptor family. Homotrimer. Forms heterotrimer with P2RX2. Heterotrimeric P2RX2/3 has a ligand dose-response profile that is distinct from either homotrimeric P2RX2 or P2RX3.

The protein localises to the cell membrane. The enzyme catalyses Ca(2+)(in) = Ca(2+)(out). The catalysed reaction is Na(+)(in) = Na(+)(out). Its activity is regulated as follows. Has high sensitivity to ATP. Fast activation by external ATP. Exhibits rapid desensitization. Sensitives to the ATP agonist:alpha/beta-methylene-ATP. Subject to allosteric inhibition by AF-219. Mg(2+) and Ca(2+) slow deactivation of P2RX3. Extracellular ATP-activated non-selective cation channel. Plays particularly important role in sensory neurons where its activation is critical for gustatory, nociceptive responses, visceral reflexes and sensory hypersensitization. In Homo sapiens (Human), this protein is P2X purinoceptor 3 (P2RX3).